Consider the following 166-residue polypeptide: Large ribosomal subunit protein uL10 (166 aa).

The protein belongs to the universal ribosomal protein uL10 family. Part of the ribosomal stalk of the 50S ribosomal subunit. The N-terminus interacts with L11 and the large rRNA to form the base of the stalk. The C-terminus forms an elongated spine to which L12 dimers bind in a sequential fashion forming a multimeric L10(L12)X complex.

In terms of biological role, forms part of the ribosomal stalk, playing a central role in the interaction of the ribosome with GTP-bound translation factors. The polypeptide is Large ribosomal subunit protein uL10 (Limosilactobacillus reuteri (strain DSM 20016) (Lactobacillus reuteri)).